The chain runs to 380 residues: Chorismate synthase (380 aa).

NADP(+) contacts are provided by arginine 48 and arginine 53. FMN contacts are provided by residues 126 to 128 (RAS), glycine 284, 299 to 303 (KPTSS), and arginine 326.

This sequence belongs to the chorismate synthase family. FMNH2 serves as cofactor.

It catalyses the reaction 5-O-(1-carboxyvinyl)-3-phosphoshikimate = chorismate + phosphate. It participates in metabolic intermediate biosynthesis; chorismate biosynthesis; chorismate from D-erythrose 4-phosphate and phosphoenolpyruvate: step 7/7. Catalyzes the anti-1,4-elimination of the C-3 phosphate and the C-6 proR hydrogen from 5-enolpyruvylshikimate-3-phosphate (EPSP) to yield chorismate, which is the branch point compound that serves as the starting substrate for the three terminal pathways of aromatic amino acid biosynthesis. This reaction introduces a second double bond into the aromatic ring system. This Ignicoccus hospitalis (strain KIN4/I / DSM 18386 / JCM 14125) protein is Chorismate synthase.